The sequence spans 385 residues: MKSLLALVAGNLVTAVSGHGYLTVPASRTRLGFEAGIDTCPECSILEPVSAWPDLTAAQVGRSGPCGYNARVSVDYNQPGDYWGNEPVVSYTAGDVVEVQWCVDHNGDHGGMFTYGICQNQTLVDLFLTPGYLPTNEEKQAAEDCFLEGELSCLHVPGQTCNYNPDCSAGEPCYQNDWFTCNAFQADNNRACQGVDGAALNSCMTTIAGGYTVTKKIKIPDYSSSHTLLRFRWNSFQTAQVYLHCADIAIVGGSGSSPSPTSTTSTATSTTTPSSTSCASAISIPVTFNALVTTTYGENVYLAGSISQLGSWSTSSAVALSASKYSSSSPLWTVTVDLPVGATFEYKYIKKESDGSIVWESGPNRSYTVPTGCSGTTATESGAWR.

An N-terminal signal peptide occupies residues 1–18; it reads MKSLLALVAGNLVTAVSG. His19 lines the Cu(2+) pocket. His19 is modified (methylhistidine). The interval 19-248 is N-terminal catalytic module; it reads HGYLTVPASR…AQVYLHCADI (230 aa). Disulfide bonds link Cys40/Cys43, Cys66/Cys245, Cys102/Cys203, Cys118/Cys145, Cys153/Cys161, Cys167/Cys173, and Cys181/Cys192. Residue His109 coordinates Cu(2+). A glycan (N-linked (GlcNAc...) asparagine) is linked at Asn120. Tyr242 contacts Cu(2+). The segment at 254 to 276 is disordered; the sequence is SGSSPSPTSTTSTATSTTTPSST. The span at 256 to 276 shows a compositional bias: low complexity; that stretch reads SSPSPTSTTSTATSTTTPSST. The CBM20 domain maps to 278 to 385; sequence CASAISIPVT…TTATESGAWR (108 aa). Residue Asn364 is glycosylated (N-linked (GlcNAc...) asparagine).

The protein belongs to the polysaccharide monooxygenase AA13 family. Cu(2+) is required as a cofactor. The catalytically essential N-terminal histidine His-19 is post-translationally modified by methylation to prevent protonation of the histidine side chain, and protect the critical active site of the enzyme from oxidative damage.

Its subcellular location is the secreted. The enzyme catalyses starch + reduced acceptor + O2 = D-glucono-1,5-lactone-terminated malto-oligosaccharides + short-chain malto-oligosaccharides + acceptor + H2O.. In terms of biological role, starch-active polysaccharide monooxygenase that oxidizes the C1 position of starch substrates, but not in cellulose, chitin, polygalacturonan or esterified pectin, nor with Arabidopsis stem cell walls. Catalysis by LPMOs requires the reduction of the active-site copper from Cu(II) to Cu(I) by a reducing agent and H(2)O(2) or O(2) as a cosubstrate. This is AA13 family lytic polysaccharide monooxygenase aasA from Emericella nidulans (strain FGSC A4 / ATCC 38163 / CBS 112.46 / NRRL 194 / M139) (Aspergillus nidulans).